A 440-amino-acid chain; its full sequence is MQEKMEVQYMVVSFSHKNVDIATREKLSFSQEEIVPFLQEINVCDSIRESILLCTCNRVELYVSMIDKKRAREHIYECFCTHKNIALEDIKNIALMRLNQYAIYHIFSVASSLDSLVIGETQITGQLKLAYKLAFENALCAKDMTRLMHFAFKCAASVRKETDISAHSVSVASTAVRMAEQKLALCDKTLENLPVLVIGSGEMGRLACKHLQNANAQITLVSRTKENARKLALELDSSINIESWEHLEQLLGQYEVLFSATSAPNCIIQSKMVQVSQKQRWWFDLALPRDIENIQMENLHIFCVDDLEEIVQEHKNAREDSAKKAQKILERYSVEFFKWLQTLGIDPIIKHIRYLAKQSALKELDRAVKKGFLPASYQQNVEKILHGAFNTFLHQPTIRLKQASENPQGDPIIEAMKNVFDISDDVVMLNGYKCEKDTIF.

Residues threonine 55 to arginine 58, serine 115, glutamate 120 to glutamine 122, and glutamine 126 contribute to the substrate site. Residue cysteine 56 is the Nucleophile of the active site. An NADP(+)-binding site is contributed by glycine 199 to glycine 204.

It belongs to the glutamyl-tRNA reductase family. In terms of assembly, homodimer.

It carries out the reaction (S)-4-amino-5-oxopentanoate + tRNA(Glu) + NADP(+) = L-glutamyl-tRNA(Glu) + NADPH + H(+). Its pathway is porphyrin-containing compound metabolism; protoporphyrin-IX biosynthesis; 5-aminolevulinate from L-glutamyl-tRNA(Glu): step 1/2. Catalyzes the NADPH-dependent reduction of glutamyl-tRNA(Glu) to glutamate 1-semialdehyde (GSA). This is Glutamyl-tRNA reductase from Helicobacter hepaticus (strain ATCC 51449 / 3B1).